The chain runs to 688 residues: Elongation factor G (688 aa).

The tr-type G domain maps to 8–282 (EKFRNIGIMA…AVVDFMPSPL (275 aa)). Residues 17 to 24 (AHIDAGKT), 81 to 85 (DTPGH), and 135 to 138 (NKMD) each bind GTP. A disordered region spans residues 282-305 (LDIPPIKGTDPETGEETDRPADDN).

Belongs to the TRAFAC class translation factor GTPase superfamily. Classic translation factor GTPase family. EF-G/EF-2 subfamily.

Its subcellular location is the cytoplasm. In terms of biological role, catalyzes the GTP-dependent ribosomal translocation step during translation elongation. During this step, the ribosome changes from the pre-translocational (PRE) to the post-translocational (POST) state as the newly formed A-site-bound peptidyl-tRNA and P-site-bound deacylated tRNA move to the P and E sites, respectively. Catalyzes the coordinated movement of the two tRNA molecules, the mRNA and conformational changes in the ribosome. This Clostridium kluyveri (strain NBRC 12016) protein is Elongation factor G.